Consider the following 355-residue polypeptide: Holliday junction branch migration complex subunit RuvB (355 aa).

The interval 1-43 (MEEMDDFTVRRGEREDITGAAGPPEERPLDPAAFEEDDEPTLR) is disordered. Residues 4-203 (MDDFTVRRGE…FGFSARLDYY (200 aa)) form a large ATPase domain (RuvB-L) region. Over residues 7–17 (FTVRRGEREDI) the composition is skewed to basic and acidic residues. Residues Leu-42, Arg-43, Gly-84, Lys-87, Thr-88, Ser-89, 150–152 (EDF), Arg-193, Tyr-203, and Arg-240 each bind ATP. Thr-88 contributes to the Mg(2+) binding site. The small ATPAse domain (RuvB-S) stretch occupies residues 204–274 (EPHELEKIVV…TANAALEMQG (71 aa)). The head domain (RuvB-H) stretch occupies residues 277-355 (HLGLDRTDRE…HLGFPVRDGG (79 aa)). Positions 313, 332, and 337 each coordinate DNA.

It belongs to the RuvB family. As to quaternary structure, homohexamer. Forms an RuvA(8)-RuvB(12)-Holliday junction (HJ) complex. HJ DNA is sandwiched between 2 RuvA tetramers; dsDNA enters through RuvA and exits via RuvB. An RuvB hexamer assembles on each DNA strand where it exits the tetramer. Each RuvB hexamer is contacted by two RuvA subunits (via domain III) on 2 adjacent RuvB subunits; this complex drives branch migration. In the full resolvosome a probable DNA-RuvA(4)-RuvB(12)-RuvC(2) complex forms which resolves the HJ.

The protein resides in the cytoplasm. It catalyses the reaction ATP + H2O = ADP + phosphate + H(+). Functionally, the RuvA-RuvB-RuvC complex processes Holliday junction (HJ) DNA during genetic recombination and DNA repair, while the RuvA-RuvB complex plays an important role in the rescue of blocked DNA replication forks via replication fork reversal (RFR). RuvA specifically binds to HJ cruciform DNA, conferring on it an open structure. The RuvB hexamer acts as an ATP-dependent pump, pulling dsDNA into and through the RuvAB complex. RuvB forms 2 homohexamers on either side of HJ DNA bound by 1 or 2 RuvA tetramers; 4 subunits per hexamer contact DNA at a time. Coordinated motions by a converter formed by DNA-disengaged RuvB subunits stimulates ATP hydrolysis and nucleotide exchange. Immobilization of the converter enables RuvB to convert the ATP-contained energy into a lever motion, pulling 2 nucleotides of DNA out of the RuvA tetramer per ATP hydrolyzed, thus driving DNA branch migration. The RuvB motors rotate together with the DNA substrate, which together with the progressing nucleotide cycle form the mechanistic basis for DNA recombination by continuous HJ branch migration. Branch migration allows RuvC to scan DNA until it finds its consensus sequence, where it cleaves and resolves cruciform DNA. In Rubrobacter xylanophilus (strain DSM 9941 / JCM 11954 / NBRC 16129 / PRD-1), this protein is Holliday junction branch migration complex subunit RuvB.